The following is a 124-amino-acid chain: SLIQFETLIMKVAKKSGMFWYSNYGCYCGWGGQGRPQDATDRCCFVHDCCYGKVTGCDPKMDVYSFSEENGDIVCGGDDPCKKEICECDRAAAICFRDNLTLYNDKKYWAFGAKNCPQEESEPC.

Disulfide bonds link C26/C116, C28/C44, C43/C95, C49/C124, C50/C88, C57/C81, and C75/C86. 3 residues coordinate Ca(2+): Y27, G29, and G31. H47 is a catalytic residue. D48 contributes to the Ca(2+) binding site. The active site involves D89.

It belongs to the phospholipase A2 family. Group II subfamily. D49 sub-subfamily. In terms of assembly, monomer. The cofactor is Ca(2+). In terms of tissue distribution, expressed by the venom gland.

Its subcellular location is the secreted. The catalysed reaction is a 1,2-diacyl-sn-glycero-3-phosphocholine + H2O = a 1-acyl-sn-glycero-3-phosphocholine + a fatty acid + H(+). Functionally, snake venom phospholipase A2 (PLA2) that acts in vivo as an anti-thrombotic agent. Inhibits platelet aggregation induced by ADP, arachidonic acid, and thrombin. PLA2 catalyzes the calcium-dependent hydrolysis of the 2-acyl groups in 3-sn-phosphoglycerides. The protein is Acidic phospholipase A2 of Gloydius halys (Chinese water mocassin).